Here is a 157-residue protein sequence, read N- to C-terminus: Endoribonuclease YbeY (157 aa).

Zn(2+)-binding residues include H116, H120, and H126.

It belongs to the endoribonuclease YbeY family. It depends on Zn(2+) as a cofactor.

Its subcellular location is the cytoplasm. In terms of biological role, single strand-specific metallo-endoribonuclease involved in late-stage 70S ribosome quality control and in maturation of the 3' terminus of the 16S rRNA. This Renibacterium salmoninarum (strain ATCC 33209 / DSM 20767 / JCM 11484 / NBRC 15589 / NCIMB 2235) protein is Endoribonuclease YbeY.